The sequence spans 1028 residues: Pro-apoptotic serine protease nma111 (1028 aa).

Positions M1–V46 are disordered. Positions V82 to D266 are serine protease. Active-site charge relay system residues include H120, D151, and S233. PDZ domains follow at residues Q289–Q374 and V876–D957. Residues S991–I1001 show a composition bias toward basic and acidic residues. A disordered region spans residues S991–D1028. The segment covering A1012–D1028 has biased composition (acidic residues).

This sequence belongs to the peptidase S1C family.

The protein localises to the nucleus. In terms of biological role, nuclear serine protease which mediates apoptosis. This chain is Pro-apoptotic serine protease nma111 (nma111), found in Aspergillus fumigatus (strain ATCC MYA-4609 / CBS 101355 / FGSC A1100 / Af293) (Neosartorya fumigata).